A 220-amino-acid polypeptide reads, in one-letter code: Probable nicotinate-nucleotide adenylyltransferase (220 aa).

This sequence belongs to the NadD family.

The enzyme catalyses nicotinate beta-D-ribonucleotide + ATP + H(+) = deamido-NAD(+) + diphosphate. It participates in cofactor biosynthesis; NAD(+) biosynthesis; deamido-NAD(+) from nicotinate D-ribonucleotide: step 1/1. In terms of biological role, catalyzes the reversible adenylation of nicotinate mononucleotide (NaMN) to nicotinic acid adenine dinucleotide (NaAD). The protein is Probable nicotinate-nucleotide adenylyltransferase of Yersinia enterocolitica serotype O:8 / biotype 1B (strain NCTC 13174 / 8081).